Here is a 112-residue protein sequence, read N- to C-terminus: Large ribosomal subunit protein eL34A (112 aa).

It belongs to the eukaryotic ribosomal protein eL34 family. In terms of assembly, component of the large ribosomal subunit (LSU). Mature yeast ribosomes consist of a small (40S) and a large (60S) subunit. The 40S small subunit contains 1 molecule of ribosomal RNA (18S rRNA) and at least 33 different proteins. The large 60S subunit contains 3 rRNA molecules (25S, 5.8S and 5S rRNA) and at least 46 different proteins.

Its subcellular location is the cytoplasm. Its function is as follows. Component of the ribosome, a large ribonucleoprotein complex responsible for the synthesis of proteins in the cell. The small ribosomal subunit (SSU) binds messenger RNAs (mRNAs) and translates the encoded message by selecting cognate aminoacyl-transfer RNA (tRNA) molecules. The large subunit (LSU) contains the ribosomal catalytic site termed the peptidyl transferase center (PTC), which catalyzes the formation of peptide bonds, thereby polymerizing the amino acids delivered by tRNAs into a polypeptide chain. The nascent polypeptides leave the ribosome through a tunnel in the LSU and interact with protein factors that function in enzymatic processing, targeting, and the membrane insertion of nascent chains at the exit of the ribosomal tunnel. The protein is Large ribosomal subunit protein eL34A (rpl3401) of Schizosaccharomyces pombe (strain 972 / ATCC 24843) (Fission yeast).